The following is a 60-amino-acid chain: Large ribosomal subunit protein bL32 (60 aa).

It belongs to the bacterial ribosomal protein bL32 family.

This chain is Large ribosomal subunit protein bL32, found in Borrelia turicatae (strain 91E135).